Consider the following 300-residue polypeptide: MGSHCSKNRSCRNYVTPTQKSNVREILKREHEHIMQGIVAFSCNISLENKNMKKNRYPDAPCFDYNRVVLPIRKGLDDYINASYVDGHNMKRRFICTQGPLEETALDFWQAVYQDRVRVIVMITKTYEDNKQKCYPYWMTHERSTVTYGELKIRTKKIKSFRNYKVTTLCLTNTNTGTVLDIKHFAYEDWPQGGVPSDVNNFLDFVLAVRHADSKTEVPISSESRVKESPILVHSSAGLDRAPAFCVIDICISKYSESAIIPLLTTVRDLRRQRNNCLSLSTQYIFCYFTVLQFVMSTPC.

Residues leucine 27–phenylalanine 294 enclose the Tyrosine-protein phosphatase domain.

The protein belongs to the protein-tyrosine phosphatase family.

This is Tyrosine phosphatase-like protein J1 (J1) from Microplitis demolitor (Parasitoid wasp).